Here is a 258-residue protein sequence, read N- to C-terminus: Imidazole glycerol phosphate synthase subunit HisF (258 aa).

Catalysis depends on residues Asp-11 and Asp-130.

Belongs to the HisA/HisF family. In terms of assembly, heterodimer of HisH and HisF.

It is found in the cytoplasm. It carries out the reaction 5-[(5-phospho-1-deoxy-D-ribulos-1-ylimino)methylamino]-1-(5-phospho-beta-D-ribosyl)imidazole-4-carboxamide + L-glutamine = D-erythro-1-(imidazol-4-yl)glycerol 3-phosphate + 5-amino-1-(5-phospho-beta-D-ribosyl)imidazole-4-carboxamide + L-glutamate + H(+). The protein operates within amino-acid biosynthesis; L-histidine biosynthesis; L-histidine from 5-phospho-alpha-D-ribose 1-diphosphate: step 5/9. Its function is as follows. IGPS catalyzes the conversion of PRFAR and glutamine to IGP, AICAR and glutamate. The HisF subunit catalyzes the cyclization activity that produces IGP and AICAR from PRFAR using the ammonia provided by the HisH subunit. The polypeptide is Imidazole glycerol phosphate synthase subunit HisF (Escherichia fergusonii (strain ATCC 35469 / DSM 13698 / CCUG 18766 / IAM 14443 / JCM 21226 / LMG 7866 / NBRC 102419 / NCTC 12128 / CDC 0568-73)).